The following is a 242-amino-acid chain: 3-oxoacyl-[acyl-carrier-protein] reductase FabG (242 aa).

NADP(+)-binding positions include 10-13 (GSTR), threonine 35, 57-58 (NV), and asparagine 84. A substrate-binding site is contributed by serine 136. Tyrosine 149 (proton acceptor) is an active-site residue. Residues 149–153 (YCAAK) and isoleucine 182 each bind NADP(+).

The protein belongs to the short-chain dehydrogenases/reductases (SDR) family. As to quaternary structure, homotetramer.

It carries out the reaction a (3R)-hydroxyacyl-[ACP] + NADP(+) = a 3-oxoacyl-[ACP] + NADPH + H(+). Its pathway is lipid metabolism; fatty acid biosynthesis. In terms of biological role, catalyzes the NADPH-dependent reduction of beta-ketoacyl-ACP substrates to beta-hydroxyacyl-ACP products, the first reductive step in the elongation cycle of fatty acid biosynthesis. This Haemophilus influenzae (strain ATCC 51907 / DSM 11121 / KW20 / Rd) protein is 3-oxoacyl-[acyl-carrier-protein] reductase FabG (fabG).